Consider the following 160-residue polypeptide: Cyclic pyranopterin monophosphate synthase (160 aa).

Substrate contacts are provided by residues 75–77 (MCH) and 116–117 (ME). Residue aspartate 131 is part of the active site.

Belongs to the MoaC family. Homohexamer; trimer of dimers.

It catalyses the reaction (8S)-3',8-cyclo-7,8-dihydroguanosine 5'-triphosphate = cyclic pyranopterin phosphate + diphosphate. It participates in cofactor biosynthesis; molybdopterin biosynthesis. In terms of biological role, catalyzes the conversion of (8S)-3',8-cyclo-7,8-dihydroguanosine 5'-triphosphate to cyclic pyranopterin monophosphate (cPMP). This is Cyclic pyranopterin monophosphate synthase from Staphylococcus haemolyticus (strain JCSC1435).